Reading from the N-terminus, the 520-residue chain is GMP synthase [glutamine-hydrolyzing] (520 aa).

The Glutamine amidotransferase type-1 domain maps to 12–205 (KIIVLDYGSQ…AVNICGARGD (194 aa)). Cys89 serves as the catalytic Nucleophile. Active-site residues include His179 and Glu181. In terms of domain architecture, GMPS ATP-PPase spans 206-395 (WSMDNFIDME…LGMPDEVVWR (190 aa)). ATP is bound at residue 233-239 (SGGVDSS).

As to quaternary structure, homodimer.

The catalysed reaction is XMP + L-glutamine + ATP + H2O = GMP + L-glutamate + AMP + diphosphate + 2 H(+). It functions in the pathway purine metabolism; GMP biosynthesis; GMP from XMP (L-Gln route): step 1/1. Functionally, catalyzes the synthesis of GMP from XMP. In Streptococcus agalactiae serotype III (strain NEM316), this protein is GMP synthase [glutamine-hydrolyzing].